Reading from the N-terminus, the 200-residue chain is MSDQLELMTGTTVGIKAKDGVVLAAEKRVSYGFYLMSKSGKKVYPITNRIGLASSGILADIQTITKVIRANIANMEIEMKRPVSVRAAAKLLSIMLFQNKYMPYIAETMVGGIDEEGPKLFILDSWGSLIEDDFAALGNGARTAIGLIETGYSSSITVKEAKELAIKAIKEAIARDPTSGDGIDTLVITGNGYLEDSIKL.

The propeptide at 1 to 10 is removed in mature form; by autocatalysis; the sequence is MSDQLELMTG. The active-site Nucleophile is threonine 11.

Belongs to the peptidase T1B family. As to quaternary structure, the 20S proteasome core is composed of 14 alpha and 14 beta subunits that assemble into four stacked heptameric rings, resulting in a barrel-shaped structure. The two inner rings, each composed of seven catalytic beta subunits, are sandwiched by two outer rings, each composed of seven alpha subunits. The catalytic chamber with the active sites is on the inside of the barrel. Has a gated structure, the ends of the cylinder being occluded by the N-termini of the alpha-subunits. Is capped at one or both ends by the proteasome regulatory ATPase, PAN.

It localises to the cytoplasm. It carries out the reaction Cleavage of peptide bonds with very broad specificity.. Its activity is regulated as follows. The formation of the proteasomal ATPase PAN-20S proteasome complex, via the docking of the C-termini of PAN into the intersubunit pockets in the alpha-rings, triggers opening of the gate for substrate entry. Interconversion between the open-gate and close-gate conformations leads to a dynamic regulation of the 20S proteasome proteolysis activity. Component of the proteasome core, a large protease complex with broad specificity involved in protein degradation. The sequence is that of Proteasome subunit beta 2 from Caldivirga maquilingensis (strain ATCC 700844 / DSM 13496 / JCM 10307 / IC-167).